The primary structure comprises 100 residues: Urease subunit gamma (100 aa).

It belongs to the urease gamma subunit family. In terms of assembly, heterotrimer of UreA (gamma), UreB (beta) and UreC (alpha) subunits. Three heterotrimers associate to form the active enzyme.

The protein localises to the cytoplasm. The enzyme catalyses urea + 2 H2O + H(+) = hydrogencarbonate + 2 NH4(+). It participates in nitrogen metabolism; urea degradation; CO(2) and NH(3) from urea (urease route): step 1/1. The sequence is that of Urease subunit gamma from Rhizobium meliloti (strain 1021) (Ensifer meliloti).